A 147-amino-acid polypeptide reads, in one-letter code: Hemoglobin subunit epsilon (147 aa).

The Globin domain occupies 3 to 147; sequence HFTAEEKSVI…VATALAHKYH (145 aa). Ser51 carries the post-translational modification Phosphoserine. 2 residues coordinate heme b: His64 and His93.

The protein belongs to the globin family. In terms of tissue distribution, red blood cells.

Functionally, hemoglobin epsilon chain is a beta-type chain found in early embryos. The chain is Hemoglobin subunit epsilon (HBE1) from Sus scrofa (Pig).